The primary structure comprises 640 residues: Threonine--tRNA ligase (640 aa).

The TGS domain occupies 1–61; it reads MVKITYPDNS…MQDSTIKLIT (61 aa). The segment at 242–533 is catalytic; that stretch reads DHRKLGPKLN…LIENFAGEFP (292 aa). Zn(2+)-binding residues include C334, H385, and H510.

The protein belongs to the class-II aminoacyl-tRNA synthetase family. As to quaternary structure, homodimer. It depends on Zn(2+) as a cofactor.

The protein localises to the cytoplasm. It carries out the reaction tRNA(Thr) + L-threonine + ATP = L-threonyl-tRNA(Thr) + AMP + diphosphate + H(+). In terms of biological role, catalyzes the attachment of threonine to tRNA(Thr) in a two-step reaction: L-threonine is first activated by ATP to form Thr-AMP and then transferred to the acceptor end of tRNA(Thr). Also edits incorrectly charged L-seryl-tRNA(Thr). This Petrotoga mobilis (strain DSM 10674 / SJ95) protein is Threonine--tRNA ligase.